The primary structure comprises 88 residues: Auxin-responsive protein SAUR21 (88 aa).

Belongs to the ARG7 family.

It is found in the cell membrane. Functionally, functions as a positive effector of cell expansion through modulation of auxin transport. This is Auxin-responsive protein SAUR21 from Arabidopsis thaliana (Mouse-ear cress).